The sequence spans 326 residues: Chain length determinant protein (326 aa).

The Cytoplasmic segment spans residues 1 to 31 (MRVENNNVSGQNHDPEQIDLIDLLVQLWRGK). The chain crosses the membrane as a helical span at residues 32–52 (MTIIISVIVAIALAIGYLAVA). Residues 53-295 (KEKWTSTAII…LPIRRDSPKK (243 aa)) lie on the Periplasmic side of the membrane. Residues 296–316 (AITLILAVLLGGMVGAGIVLG) traverse the membrane as a helical segment. Residues 317–326 (RNALRNYNAK) lie on the Cytoplasmic side of the membrane.

This sequence belongs to the WzzB/Cld/Rol family. Homodimer.

It is found in the cell inner membrane. It participates in bacterial outer membrane biogenesis; lipopolysaccharide biosynthesis. In terms of biological role, confers a modal distribution of chain length on the O-antigen component of lipopolysaccharide (LPS). Gives rise to a reduced number of short chain molecules and increases in numbers of longer molecules. This Escherichia coli (strain K12) protein is Chain length determinant protein (wzzB).